A 633-amino-acid chain; its full sequence is Dynein axonemal assembly factor 1 (633 aa).

The segment at 1–80 (MHPEASEPPV…SRDDRDDRGP (80 aa)) is disordered. The span at 22 to 42 (AGDHGDAGPGVRKEEINETKE) shows a compositional bias: basic and acidic residues. Residues 46-60 (GPCTTSCQSQQQPSG) are compositionally biased toward low complexity. Positions 70–80 (HSRDDRDDRGP) are enriched in basic and acidic residues. LRR repeat units follow at residues 101–123 (ALNDTLYLHFKGFDRIENLEEYT), 124–145 (GLRCLWLECNGIQRIENLQAQS), 146–167 (ELRCLFLQVNLLHKIENLEPLQ), 168–189 (KLDALNLSNNYIKTIENLSCLP), 190–211 (VLNTLQMAHNRLETVADIEHLR), and 215–236 (QLCVLDLSHNSLSDPEILSVLE). Residues 249–288 (NPVTKHIPNYRRTVTVRLKHLTYLDDRPVFPKDRACAEAW) enclose the LRRCT domain. Positions 326–344 (EERKKARDRGETPLPESEK) are enriched in basic and acidic residues. 2 disordered regions span residues 326–364 (EERKKARDRGETPLPESEKSIPTSPEAQEKPPKGETQQK) and 404–436 (LSGNLAHTQTPVVVTPEEVTSPVEATDGARTED). Ser-349 carries the phosphoserine modification. Residues 352 to 364 (AQEKPPKGETQQK) are compositionally biased toward basic and acidic residues. Over residues 413–427 (TPVVVTPEEVTSPVE) the composition is skewed to low complexity. Phosphothreonine is present on Thr-462. A phosphoserine mark is found at Ser-465 and Ser-488. 2 stretches are compositionally biased toward polar residues: residues 538-555 (TTDLETQSQDPSTASSHP) and 568-592 (GESNQPLPPQSCASDPTLAQSSEGG). Residues 538–633 (TTDLETQSQD…GLEDIEFGLD (96 aa)) are disordered.

Belongs to the DNAAF1 family.

The protein resides in the cell projection. Its subcellular location is the cilium. In terms of biological role, cilium-specific protein required for the stability of the ciliary architecture. Plays a role in cytoplasmic preassembly of dynein arms. Involved in regulation of microtubule-based cilia and actin-based brush border microvilli. The protein is Dynein axonemal assembly factor 1 (Dnaaf1) of Rattus norvegicus (Rat).